Here is a 96-residue protein sequence, read N- to C-terminus: SAGA-associated factor 11 (96 aa).

The SGF11-type zinc-finger motif lies at 68–89 (FHCKNCGRDVSANRFAAHLQRC).

The protein belongs to the SGF11 family. Component of the 1.8 MDa SAGA transcription coactivator-HAT complex. SAGA is built of 5 distinct domains with specialized functions. Within the SAGA complex, SUS1, SGF11, SGF73 and UBP8 form an additional subcomplex of SAGA called the DUB module (deubiquitination module). Interacts directly with SGF73, SUS1 and UBP8.

It is found in the nucleus. Functionally, functions as a component of the transcription regulatory histone acetylation (HAT) complex SAGA. At the promoters, SAGA is required for recruitment of the basal transcription machinery. It influences RNA polymerase II transcriptional activity through different activities such as TBP interaction and promoter selectivity, interaction with transcription activators, and chromatin modification through histone acetylation and deubiquitination. SAGA acetylates nucleosomal histone H3 to some extent (to form H3K9ac, H3K14ac, H3K18ac and H3K23ac). SAGA interacts with DNA via upstream activating sequences (UASs). Involved in transcriptional regulation of a subset of SAGA-regulated genes. Within the SAGA complex, participates in a subcomplex, that specifically deubiquitinates histones H2B. The sequence is that of SAGA-associated factor 11 from Vanderwaltozyma polyspora (strain ATCC 22028 / DSM 70294 / BCRC 21397 / CBS 2163 / NBRC 10782 / NRRL Y-8283 / UCD 57-17) (Kluyveromyces polysporus).